The primary structure comprises 104 residues: Chitin-binding protein 2 (104 aa).

As to quaternary structure, oligomer in an unreduced state. Glycosylated.

In terms of biological role, chitin-binding protein. Has antifungal activity against C.krusei, C.albicans, C.tropicalis and C.parapsilosis. Inhibits C.albicans by increasing cell membrane permeability and production of reactive oxygen species. Has no hemagglutinating activity. This is Chitin-binding protein 2 from Moringa oleifera (Horseradish tree).